A 245-amino-acid chain; its full sequence is Polyhedrin (245 aa).

Belongs to the polyhedrin family.

Its function is as follows. Major component of the virus occlusion bodies, which are large proteinaceous structures (polyhedra), that protect the virus from the outside environment for extended periods until they are ingested by insect larvae. The chain is Polyhedrin (PH) from Orgyia pseudotsugata multicapsid polyhedrosis virus (OpMNPV).